A 319-amino-acid chain; its full sequence is uncharacterized protein (319 aa).

Residues 21–70 are disordered; the sequence is ETETLKNSTDEVQTSSSFSSSGGRQSSPLTSGSKLEREKQTPSLEQGDTQ. A compositionally biased stretch (polar residues) spans 25 to 34; it reads LKNSTDEVQT. Low complexity predominate over residues 35–51; it reads SSSFSSSGGRQSSPLTS. The segment covering 61 to 70 has biased composition (polar residues); the sequence is TPSLEQGDTQ.

This is an uncharacterized protein from Homo sapiens (Human).